A 253-amino-acid polypeptide reads, in one-letter code: Histone H1.4 (253 aa).

The segment covering 1–33 (MSDVAVAADTTETPAAPTKASKATKASKATKAS) has biased composition (low complexity). A disordered region spans residues 1–43 (MSDVAVAADTTETPAAPTKASKATKASKATKASKATKAKTTKV). Residue serine 2 is modified to N-acetylserine. An H15 domain is found at 51–127 (AHPPFINMVT…GANGRFRLAE (77 aa)). Residues 134–253 (KSPAAAKKDA…KKAPAAAPEA (120 aa)) form a disordered region. Composition is skewed to basic and acidic residues over residues 139-149 (AKKDATGEKKA) and 188-200 (AAGDKAKKTEVKV). Composition is skewed to basic residues over residues 201-210 (KKVKSPKKIA) and 234-244 (APKKAAAKPAK).

It belongs to the histone H1/H5 family.

It is found in the nucleus. The protein localises to the chromosome. Histones H1 are necessary for the condensation of nucleosome chains into higher-order structures. This chain is Histone H1.4 (hil-4), found in Caenorhabditis elegans.